The primary structure comprises 338 residues: Fructose-1,6-bisphosphatase class 1 1 (338 aa).

Residues Glu94, Asp116, Leu118, and Asp119 each contribute to the Mg(2+) site. Substrate contacts are provided by residues 119–122 (DGSS), Asn210, and Lys276. Glu282 is a Mg(2+) binding site.

Belongs to the FBPase class 1 family. As to quaternary structure, homotetramer. Requires Mg(2+) as cofactor.

The protein localises to the cytoplasm. It catalyses the reaction beta-D-fructose 1,6-bisphosphate + H2O = beta-D-fructose 6-phosphate + phosphate. Its pathway is carbohydrate biosynthesis; gluconeogenesis. The polypeptide is Fructose-1,6-bisphosphatase class 1 1 (Paraburkholderia xenovorans (strain LB400)).